Reading from the N-terminus, the 416-residue chain is Enterobactin exporter EntS (416 aa).

At 1–21 (MNKQSWLLNLSLLKTHPAFRA) the chain is on the cytoplasmic side. Residues 22 to 42 (VFLARFISIVSLGLLGVAVPV) form a helical membrane-spanning segment. The Periplasmic segment spans residues 43–55 (QIQMMTHSTWQVG). The chain crosses the membrane as a helical span at residues 56–76 (LSVTLTGGAMFVGLMVGGVLA). Residues 77-83 (DRYERKK) lie on the Cytoplasmic side of the membrane. The chain crosses the membrane as a helical span at residues 84-104 (VILLARGTCGIGFIGLCLNAL). The Periplasmic segment spans residues 105–109 (LPEPS). The helical transmembrane segment at 110 to 130 (LLAIYLLGLWDGFFASLGVTA) threads the bilayer. At 131–156 (LLAATPALVGRENLMQAGAITMLTVR) the chain is on the cytoplasmic side. The chain crosses the membrane as a helical span at residues 157–177 (LGSVISPMIGGLLLATGGVAW). A topological domain (periplasmic) is located at residue Asn178. Residues 179-199 (YGLAAAGTFITLLPLLSLPAL) traverse the membrane as a helical segment. Over 200 to 218 (PPPPQPREHPLKSLLAGFR) the chain is Cytoplasmic. The chain crosses the membrane as a helical span at residues 219–239 (FLLASPLVGGIALLGGLLTMA). Residues 240-256 (SAVRVLYPALADNWQMS) lie on the Periplasmic side of the membrane. Residues 257 to 277 (AAQIGFLYAAIPLGAAIGALT) traverse the membrane as a helical segment. Topologically, residues 278–287 (SGKLAHSARP) are cytoplasmic. The helical transmembrane segment at 288-307 (GLLMLLSTLGSFLAIGLFGL) threads the bilayer. The Periplasmic segment spans residues 308-313 (MPMWIL). Residues 314-336 (GVICLALFGWLSAVSSLLQYTML) traverse the membrane as a helical segment. Over 337 to 356 (QTQTPEAMLGRINGLWTAQN) the chain is Cytoplasmic. The chain crosses the membrane as a helical span at residues 357-377 (VTGDAIGAALLGGLGAMMTPV). Residue Ala378 is a topological domain, periplasmic. A helical transmembrane segment spans residues 379 to 399 (SASASGFGLLIIGVLLLLVLV). The Cytoplasmic segment spans residues 400–416 (ELRRFRQTPPQVTASDS).

Belongs to the major facilitator superfamily. EntS (TC 2.A.1.38) family.

It is found in the cell inner membrane. Its function is as follows. Component of an export pathway for enterobactin. The protein is Enterobactin exporter EntS of Escherichia coli O81 (strain ED1a).